A 550-amino-acid polypeptide reads, in one-letter code: Arginine--tRNA ligase (550 aa).

Residues 130-140 (ANPTGPIHLGG) carry the 'HIGH' region motif.

This sequence belongs to the class-I aminoacyl-tRNA synthetase family. Monomer.

It localises to the cytoplasm. It carries out the reaction tRNA(Arg) + L-arginine + ATP = L-arginyl-tRNA(Arg) + AMP + diphosphate. The sequence is that of Arginine--tRNA ligase from Corynebacterium glutamicum (strain R).